The following is a 570-amino-acid chain: Molecular chaperone MKKS (570 aa).

192-199 (ERMVLGKS) contributes to the ATP binding site. The tract at residues 198–370 (KSIIVPLKGQ…FHLLPNEATV (173 aa)) is substrate-binding apical domain.

Belongs to the TCP-1 chaperonin family. As to quaternary structure, component of a complex composed at least of MKKS, BBS10, BBS12, TCP1, CCT2, CCT3, CCT4, CCT5 and CCT8. Interacts with STUB1. Interacts with BBS2 (via coiled coil domain). Interacts with CCDC28B. Interacts with BBS12. Interacts with SMARCC1, a component of the SWI/SNF complexes; the interaction takes place predominantly in the cytoplasm and may modulate SMARCC1 location. Interacts with DLEC1. In terms of tissue distribution, widely expressed in adult and fetal tissues. Expressed in the developing heart, brain retina, limb buds, as well as in the developing neural tube. Expressed in the embryo in the first and second branchial arches. Expressed in parafin embedded tissue sections of brain, kidney, retina, olfactory epithelium and the ependymal layer of ventricles. Detected only in restricted regions of these tissue sections, including the ciliated border of renal tubules, the connecting cilium and the inner and outer nuclear layers of retina, and the ciliated layer of olfactory epithelia.

The protein resides in the cytoplasm. The protein localises to the cytoskeleton. It is found in the microtubule organizing center. Its subcellular location is the centrosome. It localises to the cytosol. The protein resides in the nucleus. Its function is as follows. Probable molecular chaperone that assists the folding of proteins upon ATP hydrolysis. Plays a role in the assembly of BBSome, a complex involved in ciliogenesis regulating transports vesicles to the cilia. May play a role in protein processing in limb, cardiac and reproductive system development. May play a role in cytokinesis. This is Molecular chaperone MKKS (Mkks) from Mus musculus (Mouse).